The chain runs to 272 residues: Imidazole glycerol phosphate synthase subunit HisF (272 aa).

Residues aspartate 11 and aspartate 130 contribute to the active site.

It belongs to the HisA/HisF family. Heterodimer of HisH and HisF.

The protein localises to the cytoplasm. The enzyme catalyses 5-[(5-phospho-1-deoxy-D-ribulos-1-ylimino)methylamino]-1-(5-phospho-beta-D-ribosyl)imidazole-4-carboxamide + L-glutamine = D-erythro-1-(imidazol-4-yl)glycerol 3-phosphate + 5-amino-1-(5-phospho-beta-D-ribosyl)imidazole-4-carboxamide + L-glutamate + H(+). It participates in amino-acid biosynthesis; L-histidine biosynthesis; L-histidine from 5-phospho-alpha-D-ribose 1-diphosphate: step 5/9. IGPS catalyzes the conversion of PRFAR and glutamine to IGP, AICAR and glutamate. The HisF subunit catalyzes the cyclization activity that produces IGP and AICAR from PRFAR using the ammonia provided by the HisH subunit. In Methanococcus maripaludis (strain C6 / ATCC BAA-1332), this protein is Imidazole glycerol phosphate synthase subunit HisF.